A 247-amino-acid chain; its full sequence is Putative cyclin-T1-1 (247 aa).

It belongs to the cyclin family. Cyclin T subfamily.

This chain is Putative cyclin-T1-1 (CYCT1-1), found in Arabidopsis thaliana (Mouse-ear cress).